Consider the following 938-residue polypeptide: Kinesin-like protein KIN-7B (938 aa).

The region spanning 29-348 (KILVTVRMRP…LSFAMSAKEV (320 aa)) is the Kinesin motor domain. ATP is bound at residue 113–120 (GQTSSGKT). Positions 357-431 (VVSEKKLLKH…DLERKAKERK (75 aa)) form a coiled coil. Residues 450–481 (TKEESIPSKSVPSSRRTARDRRKDNVRQSLTS) are disordered. The stretch at 555-590 (KANLKEEINRLNSQEIAALEKKLECVQNTIDMLVSS) forms a coiled coil. Residues 628–678 (CSPLSGTENKDPESNVVSANSAPVSFGATPPKRDDNRCRTQSREGTPVSRQ) are disordered. A compositionally biased stretch (low complexity) spans 641–652 (SNVVSANSAPVS). Residues 658-669 (PKRDDNRCRTQS) show a composition bias toward basic and acidic residues.

This sequence belongs to the TRAFAC class myosin-kinesin ATPase superfamily. Kinesin family. KIN-7 subfamily. Interacts with ANP3. Interacts with TIO/FU. In terms of tissue distribution, expressed in roots, stems, flowers, pollen mother cells and embryos.

The protein resides in the cytoplasm. Its subcellular location is the cytoskeleton. It is found in the phragmoplast. Functionally, probable plus end-directed motor protein that functions in the NACK-PQR (ANP3-MKK6-MPK4) MAP kinase signaling pathway, which is essential for somatic cell cytokinesis, especially for the cell-plate formation and its expansion. May regulate the activity and the localization of ANP3, probably by association through the non-catalytic region of the kinase. Functionally redundant with NACK1 and essential to promote the progression of cytokinesis and for cellularization (formation of the cell plate) during microgametogenesis and megagametogenesis. The polypeptide is Kinesin-like protein KIN-7B (Arabidopsis thaliana (Mouse-ear cress)).